The sequence spans 189 residues: uncharacterized protein (189 aa).

An N-terminal signal peptide occupies residues 1–19 (MNKLTILFLILALISVIYA). The interval 24–189 (PSSSEDSSSN…GSGSSGTVYY (166 aa)) is disordered. The segment covering 25-69 (SSSEDSSSNDSNSQVTGSQSYSGSQSDSNSGSESHTINTGSSYSG) has biased composition (low complexity). Over residues 70-101 (SGSGSSGISGGSGSGSGSGSGSGSGSGSGSGA) the composition is skewed to gly residues. Low complexity predominate over residues 102 to 142 (VSGSQSGSGAVSGSQSGSGAVSGSQSGVQTGSQSGAGSASG). Polar residues predominate over residues 144 to 157 (FTGNPSGSQSQEIN). Gly residues predominate over residues 165–183 (SGSGAPTGAATGSGSGSGS).

This is an uncharacterized protein from Dictyostelium discoideum (Social amoeba).